A 330-amino-acid polypeptide reads, in one-letter code: Putative 1-aminocyclopropane-1-carboxylate deaminase (330 aa).

Lys-54 carries the N6-(pyridoxal phosphate)lysine modification.

This sequence belongs to the ACC deaminase/D-cysteine desulfhydrase family. It depends on pyridoxal 5'-phosphate as a cofactor.

It carries out the reaction 1-aminocyclopropane-1-carboxylate + H2O = 2-oxobutanoate + NH4(+). This Pyrococcus abyssi (strain GE5 / Orsay) protein is Putative 1-aminocyclopropane-1-carboxylate deaminase.